Reading from the N-terminus, the 239-residue chain is O-methyltransferase ankF (239 aa).

S-adenosyl-L-methionine-binding positions include glutamate 71, 73-74 (GT), serine 79, glutamate 98, and alanine 127.

It belongs to the class I-like SAM-binding methyltransferase superfamily. Cation-dependent O-methyltransferase family.

The enzyme catalyses NK13650 B + S-adenosyl-L-methionine = NK13650 D + S-adenosyl-L-homocysteine + H(+). The protein operates within secondary metabolite biosynthesis. Functionally, O-methyltransferase; part of the ank cluster that mediates the biosynthesis of NK13650 C, a highly modified cyclo-arginine-tyrosine dipeptide. AnkF converts NK13650 B to produce NK13650 D via methylation of the C-17 phenol group. Within the pathway, the cyclodipeptide synthase ankA acts as the scaffold-generating enzyme and is responsible for formation of the cyclo-Arg-Tyr diketopiperazine (cRY) from L-Arg and L-Tyr. The ankA product cRY is desaturated by the cytochrome P450 monooxygenase ankB to yield a dehydro-cyclodipeptide intermediate. The FAD-dependent monooxygenase ankC then installs the m-OH, ankD catalyzes the attachment of L-homoserine, and ankE ligates citrate to the ankD product to yield NK13650 B. The O-methyltransferase ankF is responsible for methylation of the C-17 phenol group of NK13650 B to produce NK13650 D. Amidation of NK13650 D with L-Asp by ankG then leads to the production of NK13650 C, whereas amidation of NK13650 B produces NK13650 A. The chain is O-methyltransferase ankF from Aspergillus thermomutatus (Neosartorya pseudofischeri).